Reading from the N-terminus, the 3075-residue chain is MRGGVLLVLLLCVAAQCRQRGLFPAILNLASNAHISTNATCGEKGPEMFCKLVEHVPGRPVRNPQCRICDGNSANPRERHPISHAIDGTNNWWQSPSIQNGREYHWVTITLDLRQVFQVAYVIIKAANAPRPGNWILERSLDGTTFSPWQYYAVSDSECLSRYNITPRRGPPTYRADDEVICTSYYSRLVPLEHGEIHTSLINGRPSADDLSPKLLEFTSARYIRLRLQRIRTLNADLMTLSHREPKELDPIVTRRYYYSIKDISVGGMCICYGHASSCPWDETTKKLQCQCEHNTCGESCNRCCPGYHQQPWRPGTVSSGNTCEACNCHNKAKDCYYDESVAKQKKSLNTAGQFRGGGVCINCLQNTMGINCETCIDGYYRPHKVSPYEDEPCRPCNCDPVGSLSSVCIKDDLHSDLHNGKQPGQCPCKEGYTGEKCDRCQLGYKDYPTCVSCGCNPVGSASDEPCTGPCVCKENVEGKACDRCKPGFYNLKEKNPRGCSECFCFGVSDVCSSLSWPVGQVNSMSGWLVTDLISPRKIPSQQDALGGRHQVSINNTAVMQRLAPKYYWAAPEAYLGNKLTAFGGFLKYTVSYDIPVETVDSNLMSHADVIIKGNGLTLSTQAEGLSLQPYEEYLNVVRLVPENFQDFHSKRQIDRDQLMTVLANVTHLLIRANYNSAKMALYRLESVSLDIASSNAIDLVVAADVEHCECPQGYTGTSCESCLSGYYRVDGILFGGICQPCECHGHAAECNVHGVCIACAHNTTGVHCEQCLPGFYGEPSRGTPGDCQPCACPLTIASNNFSPTCHLNDGDEVVCDWCAPGYSGAWCERCADGYYGNPTVPGESCVPCDCSGNVDPSEAGHCDSVTGECLKCLGNTDGAHCERCADGFYGDAVTAKNCRACECHVKGSHSAVCHLETGLCDCKPNVTGQQCDQCLHGYYGLDSGHGCRPCNCSVAGSVSDGCTDEGQCHCVPGVAGKRCDRCAHGFYAYQDGSCTPCDCPHTQNTCDPETGECVCPPHTQGVKCEECEDGHWGYDAEVGCQACNCSLVGSTHHRCDVVTGHCQCKSKFGGRACDQCSLGYRDFPDCVPCDCDLRGTSGDACNLEQGLCGCVEETGACPCKENVFGPQCNECREGTFALRADNPLGCSPCFCSGLSHLCSELEDYVRTPVTLGSDQPLLRVVSQSNLRGTTEGVYYQAPDFLLDAATVRQHIRAEPFYWRLPQQFQGDQLMAYGGKLKYSVAFYSLDGVGTSNFEPQVLIKGGRIRKQVIYMDAPAPENGVRQEQEVAMRENFWKYFNSVSEKPVTREDFMSVLSDIEYILIKASYGQGLQQSRISDISMEVGRKAEKLHPEEEVASLLENCVCPPGTVGFSCQDCAPGYHRGKLPAGSDRGPRPLVAPCVPCSCNNHSDTCDPNTGKCLNCGDNTAGDHCDVCTSGYYGKVTGSASDCALCACPHSPPASFSPTCVLEGDHDFRCDACLLGYEGKHCERCSSSYYGNPQTPGGSCQKCDCNPHGSVHGDCDRTSGQCVCRLGASGLRCDECEPRHILMETDCVSCDDECVGVLLNDLDEIGDAVLSLNLTGIIPVPYGILSNLENTTKYLQESLLKENMQKDLGKIKLEGVAEETDNLQKKLTRMLASTQKVNRATERIFKESQDLAIAIERLQMSITEIMEKTTLNQTLDEDFLLPNSTLQNMQQNGTSLLEIMQIRDFTQLHQNATLELKAAEDLLSQIQENYQKPLEELEVLKEAASHVLSKHNNELKAAEALVREAEAKMQESNHLLLMVNANLREFSDKKLHVQEEQNLTSELIVQGRGLIDAAAAQTDAVQDALEHLEDHQDKLLLWSAKIRHHIDDLVMHMSQRNAVDLVYRAEDHAAEFQRLADVLYSGLENIRNVSLNATSAAYVHYNIQSLIEESEELARDAHRTVTETSLLSESLVSNGKAAVQRSSRFLKEGNNLSRKLPGIALELSELRNKTNRFQENAVEITRQTNESLLILRAIPKGIRDKGAKTKELATSASQSAVSTLRDVAGLSQELLNTSASLSRVNTTLRETHQLLQDSTMATLLAGRKVKDVEIQANLLFDRLKPLKMLEENLSRNLSEIKLLISQARKQAASIKVAVSADRDCIRAYQPQISSTNYNTLTLNVKTQEPDNLLFYLGSSTASDFLAVEMRRGRVAFLWDLGSGSTRLEFPDFPIDDNRWHSIHVARFGNIGSLSVKEMSSNQKSPTKTSKSPGTANVLDVNNSTLMFVGGLGGQIKKSPAVKVTHFKGCLGEAFLNGKSIGLWNYIEREGKCRGCFGSSQNEDPSFHFDGSGYSVVEKSLPATVTQIIMLFNTFSPNGLLLYLGSYGTKDFLSIELFRGRVKVMTDLGSGPITLLTDRRYNNGTWYKIAFQRNRKQGVLAVIDAYNTSNKETKQGETPGASSDLNRLDKDPIYVGGLPRSRVVRRGVTTKSFVGCIKNLEISRSTFDLLRNSYGVRKGCLLEPIRSVSFLKGGYIELPPKSLSPESEWLVTFATTNSSGIILAALGGDVEKRGDREEAHVPFFSVMLIGGNIEVHVNPGDGTGLRKALLHAPTGTCSDGQAHSISLVRNRRIITVQLDENNPVEMKLGTLVESRTINVSNLYVGGIPEGEGTSLLTMRRSFHGCIKNLIFNLELLDFNSAVGHEQVDLDTCWLSERPKLAPDAEDSKLLPEPRAFPEQCVVDAALEYVPGAHQFGLTQNSHFILPFNQSAVRKKLSVELSIRTFASSGLIYYMAHQNQADYAVLQLHGGRLHFMFDLGKGRTKVSHPALLSDGKWHTVKTDYVKRKGFITVDGRESPMVTVVGDGTMLDVEGLFYLGGLPSQYQARKIGNITHSIPACIGDVTVNSKQLDKDSPVSAFTVNRCYAVAQEGTYFDGSGYAALVKEGYKVQSDVNITLEFRTSSQNGVLLGISTAKVDAIGLELVDGKVLFHVNNGAGRITAAYEPKTATVLCDGKWHTLQANKSKHRITLIVDGNAVGAESPHTQSTSVDTNNPIYVGGYPAGVKQKCLRSQTSFRGCLRKLALIKSPQVQSFDFSRAFELHGVFLHSCPGTES.

Positions 1-17 (MRGGVLLVLLLCVAAQC) are cleaved as a signal peptide. The Laminin N-terminal domain occupies 18–269 (RQRGLFPAIL…SIKDISVGGM (252 aa)). Intrachain disulfides connect Cys-270–Cys-279, Cys-272–Cys-290, Cys-292–Cys-301, Cys-304–Cys-324, Cys-327–Cys-336, Cys-329–Cys-361, Cys-364–Cys-373, Cys-376–Cys-394, Cys-397–Cys-409, Cys-399–Cys-427, Cys-429–Cys-438, Cys-441–Cys-451, Cys-454–Cys-467, Cys-456–Cys-471, Cys-473–Cys-482, and Cys-485–Cys-500. Laminin EGF-like domains follow at residues 270–326 (CICY…TCEA), 327–396 (CNCH…PCRP), 397–453 (CNCD…TCVS), and 454–502 (CGCN…GCSE). Residues 503–512 (CFCFGVSDVC) form the Laminin EGF-like 5; first part domain. The Laminin IV type A 1 domain occupies 516–708 (SWPVGQVNSM…DLVVAADVEH (193 aa)). Asn-665 carries an N-linked (GlcNAc...) asparagine glycan. Residues 709–741 (CECPQGYTGTSCESCLSGYYRVDGILFGGICQP) enclose the Laminin EGF-like 5; second part domain. Cystine bridges form between Cys-742/Cys-751, Cys-744/Cys-757, Cys-760/Cys-769, Cys-772/Cys-788, Cys-791/Cys-806, Cys-793/Cys-816, Cys-819/Cys-828, Cys-831/Cys-846, Cys-849/Cys-863, Cys-851/Cys-870, Cys-873/Cys-882, Cys-885/Cys-899, Cys-902/Cys-914, Cys-904/Cys-921, Cys-923/Cys-932, Cys-935/Cys-948, Cys-951/Cys-963, Cys-953/Cys-969, Cys-971/Cys-980, Cys-983/Cys-995, Cys-998/Cys-1007, Cys-1000/Cys-1014, Cys-1016/Cys-1025, Cys-1028/Cys-1041, Cys-1044/Cys-1056, Cys-1046/Cys-1063, Cys-1065/Cys-1074, Cys-1077/Cys-1087, Cys-1090/Cys-1102, Cys-1092/Cys-1118, Cys-1120/Cys-1129, and Cys-1132/Cys-1147. 8 Laminin EGF-like domains span residues 742 to 790 (CECH…DCQP), 791 to 848 (CACP…SCVP), 849 to 901 (CDCS…NCRA), 902 to 950 (CECH…GCRP), 951 to 997 (CNCS…SCTP), 998 to 1043 (CDCP…GCQA), 1044 to 1089 (CNCS…DCVP), and 1090 to 1149 (CDCD…GCSP). The 10-residue stretch at 1150-1159 (CFCSGLSHLC) folds into the Laminin EGF-like 14; first part domain. Residues 1170-1361 (VTLGSDQPLL…EEEVASLLEN (192 aa)) enclose the Laminin IV type A 2 domain. One can recognise a Laminin EGF-like 14; second part domain in the interval 1362 to 1402 (CVCPPGTVGFSCQDCAPGYHRGKLPAGSDRGPRPLVAPCVP). 12 cysteine pairs are disulfide-bonded: Cys-1403–Cys-1412, Cys-1405–Cys-1419, Cys-1422–Cys-1431, Cys-1434–Cys-1449, Cys-1452–Cys-1466, Cys-1454–Cys-1476, Cys-1479–Cys-1488, Cys-1491–Cys-1506, Cys-1509–Cys-1521, Cys-1511–Cys-1528, Cys-1530–Cys-1539, and Cys-1542–Cys-1553. 3 Laminin EGF-like domains span residues 1403–1451 (CSCN…DCAL), 1452–1508 (CACP…SCQK), and 1509–1555 (CDCN…DCVS). The tract at residues 1556–2116 (CDDECVGVLL…SQARKQAASI (561 aa)) is domain II and I. N-linked (GlcNAc...) asparagine glycosylation is found at Asn-1579, Asn-1689, Asn-1717, Asn-2047, and Asn-2243. Residues 1706 to 1783 (MQIRDFTQLH…KMQESNHLLL (78 aa)) adopt a coiled-coil conformation. 5 consecutive Laminin G-like domains span residues 2117 to 2297 (KVAV…CRGC), 2305 to 2481 (DPSF…RKGC), 2486 to 2673 (IRSV…LDTC), 2713 to 2885 (AHQF…VNRC), and 2890 to 3070 (QEGT…LHSC). Disulfide bonds link Cys-2271–Cys-2297 and Cys-2457–Cys-2481. Residues 2534-2536 (RGD) carry the Cell attachment site motif. 3 cysteine pairs are disulfide-bonded: Cys-2646-Cys-2673, Cys-2860-Cys-2885, and Cys-3039-Cys-3070.

In terms of assembly, laminin is a complex glycoprotein, consisting of three different polypeptide chains (alpha, beta, gamma), which are bound to each other by disulfide bonds into a cross-shaped molecule comprising one long and three short arms with globules at each end. Alpha-1 is a subunit of laminin-1 (laminin-111 or EHS laminin) and laminin-3 (laminin-121 or S-laminin). Tyrosine phosphorylated by PKDCC/VLK.

It is found in the secreted. It localises to the extracellular space. The protein resides in the extracellular matrix. Its subcellular location is the basement membrane. Functionally, binding to cells via a high affinity receptor, laminin is thought to mediate the attachment, migration and organization of cells into tissues during embryonic development by interacting with other extracellular matrix components. The protein is Laminin subunit alpha-1 (LAMA1) of Homo sapiens (Human).